The primary structure comprises 468 residues: Tyrosine phenol-lyase (468 aa).

N6-(pyridoxal phosphate)lysine is present on Lys-260.

It belongs to the beta-eliminating lyase family. In terms of assembly, homotetramer. Requires pyridoxal 5'-phosphate as cofactor.

The enzyme catalyses L-tyrosine + H2O = phenol + pyruvate + NH4(+). The polypeptide is Tyrosine phenol-lyase (Lacrimispora saccharolytica (strain ATCC 35040 / DSM 2544 / NRCC 2533 / WM1) (Clostridium saccharolyticum)).